A 466-amino-acid chain; its full sequence is Glutamate--tRNA ligase (466 aa).

Residues 10–20 carry the 'HIGH' region motif; sequence PSPTGYLHIGG. Positions 237–241 match the 'KMSKS' region motif; sequence RLSKR. Lys240 contacts ATP.

This sequence belongs to the class-I aminoacyl-tRNA synthetase family. Glutamate--tRNA ligase type 1 subfamily. As to quaternary structure, monomer.

The protein localises to the cytoplasm. It carries out the reaction tRNA(Glu) + L-glutamate + ATP = L-glutamyl-tRNA(Glu) + AMP + diphosphate. Its function is as follows. Catalyzes the attachment of glutamate to tRNA(Glu) in a two-step reaction: glutamate is first activated by ATP to form Glu-AMP and then transferred to the acceptor end of tRNA(Glu). This is Glutamate--tRNA ligase from Syntrophotalea carbinolica (strain DSM 2380 / NBRC 103641 / GraBd1) (Pelobacter carbinolicus).